The primary structure comprises 465 residues: Argininosuccinate lyase (465 aa).

The protein belongs to the lyase 1 family. Argininosuccinate lyase subfamily.

It is found in the cytoplasm. The catalysed reaction is 2-(N(omega)-L-arginino)succinate = fumarate + L-arginine. Its pathway is amino-acid biosynthesis; L-arginine biosynthesis; L-arginine from L-ornithine and carbamoyl phosphate: step 3/3. The polypeptide is Argininosuccinate lyase (Halorhodospira halophila (strain DSM 244 / SL1) (Ectothiorhodospira halophila (strain DSM 244 / SL1))).